We begin with the raw amino-acid sequence, 589 residues long: Protein POF1B (589 aa).

Residues Thr-334–Thr-443 are a coiled coil.

In terms of assembly, interacts with nonmuscle actin.

The protein resides in the cell junction. It is found in the tight junction. Plays a key role in the organization of epithelial monolayers by regulating the actin cytoskeleton. May be involved in ovary development. This is Protein POF1B (POF1B) from Homo sapiens (Human).